We begin with the raw amino-acid sequence, 554 residues long: Hydroxylamine reductase (554 aa).

[2Fe-2S] cluster contacts are provided by C3, C6, C18, and C25. Hybrid [4Fe-2O-2S] cluster is bound by residues H252, E276, C320, C408, C436, C461, E495, and K497. Cysteine persulfide is present on C408.

The protein belongs to the HCP family. Requires [2Fe-2S] cluster as cofactor. Hybrid [4Fe-2O-2S] cluster serves as cofactor.

The protein localises to the cytoplasm. It carries out the reaction A + NH4(+) + H2O = hydroxylamine + AH2 + H(+). Its function is as follows. Catalyzes the reduction of hydroxylamine to form NH(3) and H(2)O. This Photobacterium profundum (strain SS9) protein is Hydroxylamine reductase.